Reading from the N-terminus, the 443-residue chain is Carbohydrate sulfotransferase 9 (443 aa).

The Cytoplasmic segment spans residues 1-12 (MQPSEMVMNPKQ). A helical; Signal-anchor for type II membrane protein transmembrane segment spans residues 13-33 (VFLSVLIFGVAGLLLFMYLQV). At 34–443 (WIEEQHTGRV…LMFNYTTPFL (410 aa)) the chain is on the lumenal side. Positions 108–128 (LTKTSHSQGGDQALSKSTGSP) are enriched in polar residues. A disordered region spans residues 108-132 (LTKTSHSQGGDQALSKSTGSPTEKL). An N-linked (GlcNAc...) asparagine glycan is attached at asparagine 159. 220–226 (PKAGCSN) contributes to the 3'-phosphoadenylyl sulfate binding site. Asparagine 243 carries N-linked (GlcNAc...) asparagine glycosylation. A 3'-phosphoadenylyl sulfate-binding site is contributed by 280–288 (RDPMERLVS). Residues asparagine 324 and asparagine 437 are each glycosylated (N-linked (GlcNAc...) asparagine).

It belongs to the sulfotransferase 2 family. As to expression, highly expressed in trachea. Also expressed in fetal lung, adult pancreas, testis and salivary gland. Expressed at low level in pituitary gland, apex of the heart, adult lung, prostate and mammary gland. Weakly or not expressed in heart, liver and spinal cord.

The protein resides in the golgi apparatus membrane. It is found in the secreted. In terms of biological role, catalyzes the transfer of sulfate to position 4 of non-reducing N-acetylgalactosamine (GalNAc) residues in both N-glycans and O-glycans. Participates in biosynthesis of glycoprotein hormones lutropin and thyrotropin, by mediating sulfation of their carbohydrate structures. Has a higher activity toward carbonic anhydrase VI than toward lutropin. Only active against terminal GalNAcbeta1,GalNAcbeta. Isoform 2, but not isoform 1, is active toward chondroitin. The sequence is that of Carbohydrate sulfotransferase 9 (CHST9) from Homo sapiens (Human).